The primary structure comprises 91 residues: MAHKKGVGSSRNGRDSNPKMRGVKRFGGEHVRAGNIIVRQCGTKIKPGENVGVGRDWTLYALVDGVVQFGHYSRTQKMVSVIPVTAAETAH.

The segment at 1-26 (MAHKKGVGSSRNGRDSNPKMRGVKRF) is disordered.

This sequence belongs to the bacterial ribosomal protein bL27 family.

In Chloroflexus aurantiacus (strain ATCC 29366 / DSM 635 / J-10-fl), this protein is Large ribosomal subunit protein bL27.